Consider the following 366-residue polypeptide: Histone-lysine N-methyltransferase SETD7 (366 aa).

MORN repeat units lie at residues 36 to 58 (FEGH…DGST), 59 to 81 (LEGF…DGGS), and 106 to 128 (FKGQ…DGGS). The SET domain occupies 214-336 (ERVYVNDSLI…KDEELTVAYG (123 aa)). S-adenosyl-L-methionine is bound by residues 226–228 (AGE), Asn-296, and His-297.

This sequence belongs to the class V-like SAM-binding methyltransferase superfamily. Histone-lysine methyltransferase family. SET7 subfamily.

It localises to the nucleus. Its subcellular location is the chromosome. It catalyses the reaction L-lysyl(4)-[histone H3] + S-adenosyl-L-methionine = N(6)-methyl-L-lysyl(4)-[histone H3] + S-adenosyl-L-homocysteine + H(+). The catalysed reaction is L-lysyl-[protein] + S-adenosyl-L-methionine = N(6)-methyl-L-lysyl-[protein] + S-adenosyl-L-homocysteine + H(+). In terms of biological role, histone methyltransferase that specifically monomethylates 'Lys-4' of histone H3. H3 'Lys-4' methylation represents a specific tag for epigenetic transcriptional activation. Plays a central role in the transcriptional activation of genes. Also has methyltransferase activity toward non-histone proteins. This is Histone-lysine N-methyltransferase SETD7 (setd7) from Xenopus tropicalis (Western clawed frog).